Here is a 192-residue protein sequence, read N- to C-terminus: Probable nicotinate-nucleotide adenylyltransferase (192 aa).

This sequence belongs to the NadD family.

It carries out the reaction nicotinate beta-D-ribonucleotide + ATP + H(+) = deamido-NAD(+) + diphosphate. It functions in the pathway cofactor biosynthesis; NAD(+) biosynthesis; deamido-NAD(+) from nicotinate D-ribonucleotide: step 1/1. Functionally, catalyzes the reversible adenylation of nicotinate mononucleotide (NaMN) to nicotinic acid adenine dinucleotide (NaAD). This is Probable nicotinate-nucleotide adenylyltransferase from Bradyrhizobium sp. (strain ORS 278).